Here is a 214-residue protein sequence, read N- to C-terminus: Probable transaldolase (214 aa).

Residue lysine 83 is the Schiff-base intermediate with substrate of the active site.

This sequence belongs to the transaldolase family. Type 3B subfamily.

Its subcellular location is the cytoplasm. It catalyses the reaction D-sedoheptulose 7-phosphate + D-glyceraldehyde 3-phosphate = D-erythrose 4-phosphate + beta-D-fructose 6-phosphate. It functions in the pathway carbohydrate degradation; pentose phosphate pathway; D-glyceraldehyde 3-phosphate and beta-D-fructose 6-phosphate from D-ribose 5-phosphate and D-xylulose 5-phosphate (non-oxidative stage): step 2/3. Transaldolase is important for the balance of metabolites in the pentose-phosphate pathway. This chain is Probable transaldolase, found in Clostridium botulinum (strain Alaska E43 / Type E3).